We begin with the raw amino-acid sequence, 265 residues long: Expansin-like A1 (265 aa).

The first 20 residues, 1 to 20, serve as a signal peptide directing secretion; it reads MGSFLFLIVVIFLFSSSVNA. The Expansin-like EG45 domain maps to 41-147; the sequence is SGACAYGSMA…QRVPCDYGNK (107 aa). The helical transmembrane segment at 42 to 62 threads the bilayer; that stretch reads GACAYGSMATSFFAGHIAAAI. Asn99 and Asn102 each carry an N-linked (GlcNAc...) asparagine glycan. The 84-residue stretch at 161–244 folds into the Expansin-like CBD domain; it reads NYLEIKLLYQ…NWEAGKIYDA (84 aa).

The protein belongs to the expansin family. Expansin-like A subfamily.

The protein localises to the membrane. In Arabidopsis thaliana (Mouse-ear cress), this protein is Expansin-like A1 (EXLA1).